The following is a 186-amino-acid chain: MSVADVKKGVEQKMQRSIEAFKNDLAKIRTGRAHTGLLDHVQVDYYGSMVPISQVANLTLVDARTIGVQPWEKNMVAKVEKAIREADLGLNPATAGDLIRVPMPALTEERRRELTKVVKSEGETAKVAIRNLRRDANEALKKLVKDKEISEDDERRASDDVQKLTDKHVAEVDKLVQSKEAEIMTV.

This sequence belongs to the RRF family.

It is found in the cytoplasm. Responsible for the release of ribosomes from messenger RNA at the termination of protein biosynthesis. May increase the efficiency of translation by recycling ribosomes from one round of translation to another. This chain is Ribosome-recycling factor, found in Burkholderia ambifaria (strain ATCC BAA-244 / DSM 16087 / CCUG 44356 / LMG 19182 / AMMD) (Burkholderia cepacia (strain AMMD)).